The sequence spans 309 residues: Aspartate carbamoyltransferase catalytic subunit (309 aa).

2 residues coordinate carbamoyl phosphate: arginine 54 and threonine 55. Lysine 82 lines the L-aspartate pocket. Carbamoyl phosphate-binding residues include arginine 104, histidine 132, and glutamine 135. L-aspartate contacts are provided by arginine 165 and arginine 219. Carbamoyl phosphate is bound by residues glycine 260 and proline 261.

Belongs to the aspartate/ornithine carbamoyltransferase superfamily. ATCase family. As to quaternary structure, heterododecamer (2C3:3R2) of six catalytic PyrB chains organized as two trimers (C3), and six regulatory PyrI chains organized as three dimers (R2).

The enzyme catalyses carbamoyl phosphate + L-aspartate = N-carbamoyl-L-aspartate + phosphate + H(+). The protein operates within pyrimidine metabolism; UMP biosynthesis via de novo pathway; (S)-dihydroorotate from bicarbonate: step 2/3. In terms of biological role, catalyzes the condensation of carbamoyl phosphate and aspartate to form carbamoyl aspartate and inorganic phosphate, the committed step in the de novo pyrimidine nucleotide biosynthesis pathway. The protein is Aspartate carbamoyltransferase catalytic subunit of Parafrankia sp. (strain EAN1pec).